We begin with the raw amino-acid sequence, 541 residues long: Arginine-containing cyclodipeptide synthase avaA (541 aa).

A Conserved DDXXE motif motif is present at residues 428–432 (DDIAE).

This sequence belongs to the arginine-containing cyclodipeptide synthase family.

The enzyme catalyses L-tryptophyl-tRNA(Trp) + L-arginyl-tRNA(Arg) = cyclo(L-arginyl-L-tryptophyl) + tRNA(Trp) + tRNA(Arg) + H(+). It participates in secondary metabolite biosynthesis. Functionally, arginine-containing cyclodipeptide synthase; part of the cluster that mediates the biosynthesis of a highly modified cyclo-arginine-tryptophan dipeptide (cRW). Within the pathway, avaA acts as the scaffold-generating enzyme and is responsible for formation of the cyclo-Arg-Trp diketopiperazine (cRW) from L-arginyl-tRNA(Arg) + L-tryptophanyl-tRNA(Trp). AvaB then acts as a multifunctional flavoenzyme that is responsible for generating the cyclo-Arg-formylkynurenine DKP, which can be deformylated by avaC. AvaB then catalyzes an additional N-oxidation followed by cyclization and dehydration. The next step is an N-acetylation of the guanidine group catalyzed by the arginine N-acetyltransferase AvaD. The role of the additional enzymes identified within the ava cluster still have to be determined. The polypeptide is Arginine-containing cyclodipeptide synthase avaA (Aspergillus versicolor).